The chain runs to 443 residues: Pyrrolysine--tRNA ligase (443 aa).

The disordered stretch occupies residues 103–177; sequence VRKAMPKSVA…PAAPVPTSAP (75 aa). Positions 131 to 177 are enriched in low complexity; that stretch reads PAPATPVSAPAQAPAPSTGSASATSASAQRMANSAAAPAAPVPTSAP.

Belongs to the class-II aminoacyl-tRNA synthetase family.

It is found in the cytoplasm. The enzyme catalyses tRNA(Pyl) + L-pyrrolysine + ATP = L-pyrrolysyl-tRNA(Pyl) + AMP + diphosphate. In terms of biological role, catalyzes the attachment of pyrrolysine to tRNA(Pyl). Pyrrolysine is a lysine derivative encoded by the termination codon UAG. The sequence is that of Pyrrolysine--tRNA ligase from Methanosarcina acetivorans (strain ATCC 35395 / DSM 2834 / JCM 12185 / C2A).